Here is a 178-residue protein sequence, read N- to C-terminus: MAKRKKKEVFDWEDEDQEEIIWVSKSEIKRDAEDLKQLGEKIVNLTKANLAKIPLDESLLDAIELAQRLQKEARRRQLQYIGKLFRGIDVEPIREALDKIENKHNQQQAMLHKIEKVCDELVEKGDVALTDLLNDYPDGDRQQLRNLIRSAQKELEQNKPSKAYREIYQMLKVLMLED.

Belongs to the DarP family.

It is found in the cytoplasm. Functionally, member of a network of 50S ribosomal subunit biogenesis factors which assembles along the 30S-50S interface, preventing incorrect 23S rRNA structures from forming. Promotes peptidyl transferase center (PTC) maturation. In Haemophilus influenzae (strain 86-028NP), this protein is Dual-action ribosomal maturation protein DarP.